The chain runs to 640 residues: Threonine--tRNA ligase (640 aa).

The 61-residue stretch at 1–61 (MPTITLPDGS…ENDASLQIIT (61 aa)) folds into the TGS domain. Residues 242 to 533 (DHRKIGKRLG…LIEHYEGAFP (292 aa)) are catalytic. Zn(2+) contacts are provided by cysteine 333, histidine 384, and histidine 510.

Belongs to the class-II aminoacyl-tRNA synthetase family. As to quaternary structure, homodimer. Zn(2+) serves as cofactor.

The protein localises to the cytoplasm. The catalysed reaction is tRNA(Thr) + L-threonine + ATP = L-threonyl-tRNA(Thr) + AMP + diphosphate + H(+). Functionally, catalyzes the attachment of threonine to tRNA(Thr) in a two-step reaction: L-threonine is first activated by ATP to form Thr-AMP and then transferred to the acceptor end of tRNA(Thr). Also edits incorrectly charged L-seryl-tRNA(Thr). In Pseudomonas syringae pv. tomato (strain ATCC BAA-871 / DC3000), this protein is Threonine--tRNA ligase.